Reading from the N-terminus, the 689-residue chain is 7SK snRNA methylphosphate capping enzyme (689 aa).

Position 1 is an N-acetylmethionine (methionine 1). A compositionally biased stretch (basic and acidic residues) spans 1-10 (MIEMAAEKEP). The disordered stretch occupies residues 1-167 (MIEMAAEKEP…GGGGFKHPAF (167 aa)). Low complexity predominate over residues 52–84 (GRCAPSAGSPAAAVGRESPGAAATSSSGPQAQQ). 4 positions are modified to phosphoserine: serine 57, serine 60, serine 69, and serine 101. An Omega-N-methylarginine modification is found at arginine 117. Serine 152, serine 175, and serine 179 each carry phosphoserine. Position 213 is a phosphothreonine (threonine 213). 3 positions are modified to phosphoserine: serine 216, serine 217, and serine 254. Positions 258-269 (TGRKRHRHRGQH) are enriched in basic residues. A disordered region spans residues 258–314 (TGRKRHRHRGQHHQQQQAAGGSESHPVPPTAPLTPLLHGEGASQQPRHRGQNRDAPQ). Threonine 291 bears the Phosphothreonine mark. Phosphoserine occurs at positions 330 and 344. Residues 332–407 (LPSALQGPSG…HHPLPAAGFK (76 aa)) form a disordered region. The segment covering 338–359 (GPSGSLSAPPAASVISAPPSSS) has biased composition (low complexity). Residues 360–369 (SRHRKRRRTS) are compositionally biased toward basic residues. Serine 390 carries the phosphoserine modification. S-adenosyl-L-methionine contacts are provided by residues tyrosine 422, arginine 433, 451-453 (GCN), 474-475 (DI), 559-560 (NY), and leucine 581. The Bin3-type SAM domain maps to 431 to 686 (DGRLRVLKPE…PVYLFHKARS (256 aa)). Lysine 643 participates in a covalent cross-link: Glycyl lysine isopeptide (Lys-Gly) (interchain with G-Cter in SUMO2).

It belongs to the methyltransferase superfamily. Core component of the 7SK RNP complex, at least composed of 7SK RNA, LARP7, MEPCE, HEXIM1 (or HEXIM2) and P-TEFb (composed of CDK9 and CCNT1/cyclin-T1). Interacts with METTL16. Interacts with RBM7; upon genotoxic stress this interaction is enhanced, triggering the release of inactive P-TEFb complex from the core, yielding to P-TEFb complex activation. Post-translationally, dephosphorylated at Ser-152 by the PNUTS-PP1 complex, promoting RNA polymerase II transcription pause-release. As to expression, expressed in chronic myeloid leukemia cells, adrenal gland, brain, cerebellum, kidney, lung, mammary gland and testis. Weakly or not expressed in other tissues.

The protein resides in the nucleus. It carries out the reaction a 5'-end triphospho-guanosine-ribonucleotide-snRNA + S-adenosyl-L-methionine = a 5'-end methyltriphosphate-guanosine-ribonucleotide-snRNA + S-adenosyl-L-homocysteine. In terms of biological role, S-adenosyl-L-methionine-dependent methyltransferase that adds a methylphosphate cap at the 5'-end of 7SK snRNA (7SK RNA), leading to stabilize it. Also has a non-enzymatic function as part of the 7SK RNP complex: the 7SK RNP complex sequesters the positive transcription elongation factor b (P-TEFb) in a large inactive 7SK RNP complex preventing RNA polymerase II phosphorylation and subsequent transcriptional elongation. The 7SK RNP complex also promotes snRNA gene transcription by RNA polymerase II via interaction with the little elongation complex (LEC). In the 7SK RNP complex, MEPCE is required to stabilize 7SK RNA and facilitate the assembly of 7SK RNP complex. MEPCE has a non-enzymatic function in the 7SK RNP complex; interaction with LARP7 within the 7SK RNP complex occluding its catalytic center. Also required for stability of U6 snRNAs. This chain is 7SK snRNA methylphosphate capping enzyme, found in Homo sapiens (Human).